The following is a 966-amino-acid chain: Valine--tRNA ligase (966 aa).

Positions 48–58 (PNITGGLHLGH) match the 'HIGH' region motif. A coiled-coil region spans residues 348–368 (DYKDARKKIIEECKRLKILED). Residues 566 to 570 (KMSKS) carry the 'KMSKS' region motif. ATP is bound at residue K569. Residues 939 to 960 (FKKSQEKLNHYNKTKNKLLNQY) adopt a coiled-coil conformation.

The protein belongs to the class-I aminoacyl-tRNA synthetase family. ValS type 1 subfamily. As to quaternary structure, monomer.

It is found in the cytoplasm. It catalyses the reaction tRNA(Val) + L-valine + ATP = L-valyl-tRNA(Val) + AMP + diphosphate. Its function is as follows. Catalyzes the attachment of valine to tRNA(Val). As ValRS can inadvertently accommodate and process structurally similar amino acids such as threonine, to avoid such errors, it has a 'posttransfer' editing activity that hydrolyzes mischarged Thr-tRNA(Val) in a tRNA-dependent manner. This Blochmanniella floridana protein is Valine--tRNA ligase.